The primary structure comprises 316 residues: Protoheme IX farnesyltransferase (316 aa).

9 helical membrane passes run 32–52, 53–73, 93–113, 116–136, 152–172, 180–200, 221–241, 252–271, and 289–309; these read VMSL…GHIH, PVLG…SGAL, IPAG…LSGF, VILG…TIFF, NIVI…ACVT, TVLF…LALF, VTKH…ILPS, LVAA…VWRM, and IFYL…SIFV.

It belongs to the UbiA prenyltransferase family. Protoheme IX farnesyltransferase subfamily.

It localises to the cell inner membrane. It catalyses the reaction heme b + (2E,6E)-farnesyl diphosphate + H2O = Fe(II)-heme o + diphosphate. The protein operates within porphyrin-containing compound metabolism; heme O biosynthesis; heme O from protoheme: step 1/1. Converts heme B (protoheme IX) to heme O by substitution of the vinyl group on carbon 2 of heme B porphyrin ring with a hydroxyethyl farnesyl side group. This Rhizobium leguminosarum bv. trifolii (strain WSM2304) protein is Protoheme IX farnesyltransferase.